We begin with the raw amino-acid sequence, 128 residues long: Small ribosomal subunit protein bS6 (128 aa).

The disordered stretch occupies residues 105–128; that stretch reads AKVTEEEPVEAAPEAKVETTTEEE. The span at 117-128 shows a compositional bias: basic and acidic residues; sequence PEAKVETTTEEE.

It belongs to the bacterial ribosomal protein bS6 family.

Binds together with bS18 to 16S ribosomal RNA. This is Small ribosomal subunit protein bS6 from Geotalea daltonii (strain DSM 22248 / JCM 15807 / FRC-32) (Geobacter daltonii).